Here is a 223-residue protein sequence, read N- to C-terminus: Imidazoleglycerol-phosphate dehydratase (223 aa).

Belongs to the imidazoleglycerol-phosphate dehydratase family.

The enzyme catalyses D-erythro-1-(imidazol-4-yl)glycerol 3-phosphate = 3-(imidazol-4-yl)-2-oxopropyl phosphate + H2O. It participates in amino-acid biosynthesis; L-histidine biosynthesis; L-histidine from 5-phospho-alpha-D-ribose 1-diphosphate: step 6/9. The polypeptide is Imidazoleglycerol-phosphate dehydratase (HIS3) (Zygosaccharomyces bailii).